The sequence spans 279 residues: Replication protein A 32 kDa subunit A (279 aa).

The interval 1-33 (MFSSSQFEPNSGFSGGGFMSSQPSQAYESSSST) is disordered. Residues 19–32 (MSSQPSQAYESSSS) show a composition bias toward low complexity. The segment at residues 73–148 (VSLVGLVCDK…QLLVFSVRPI (76 aa)) is a DNA-binding region (OB).

It belongs to the replication factor A protein 2 family. In terms of assembly, heterotrimer of RPA1, RPA2 and RPA3 (canonical replication protein A complex). Interacts with ROS1. Binds to ASE1/At3g02920, PDX2, At5g62350, RPA1A/At2g06510, ARF1/At1g10630, At4g18590 and At3g52630. Phosphorylated in a cell-cycle-dependent manner (from the S phase until mitosis). In response to DNA damage, recruited to DNA-repair nuclear foci, as a hypophosphorylated form. In terms of tissue distribution, strongly expressed in shoot and root meristems. Present in seedlings, roots, leaves, siliques and flowers.

Its subcellular location is the nucleus. Component of the replication protein A complex (RPA) required for DNA recombination, repair and replication. The activity of RPA is mediated by single-stranded DNA binding and protein interactions. Required fo cell division in meristems. Involved in the maintenance of transcriptional epigenetic gene silencing (TGS) at specific loci (including some transposons) by regulating histone H3 acetylation, 'Lys-4' and 'Lys-9' methylation. The chain is Replication protein A 32 kDa subunit A (RPA2A) from Arabidopsis thaliana (Mouse-ear cress).